Reading from the N-terminus, the 361-residue chain is Cytochrome c peroxidase, mitochondrial (361 aa).

The N-terminal 41 residues, methionine 1 to tyrosine 41, are a transit peptide targeting the mitochondrion. Histidine 122 serves as the catalytic Proton acceptor. Histidine 245 is a binding site for heme b. Tryptophan 261 (tryptophan radical intermediate) is an active-site residue.

Belongs to the peroxidase family. Cytochrome c peroxidase subfamily. Forms a one-to-one complex with cytochrome c. Heme b serves as cofactor.

The protein localises to the mitochondrion matrix. The protein resides in the mitochondrion intermembrane space. The enzyme catalyses 2 Fe(II)-[cytochrome c] + H2O2 + 2 H(+) = 2 Fe(III)-[cytochrome c] + 2 H2O. In terms of biological role, destroys radicals which are normally produced within the cells and which are toxic to biological systems. This Emericella nidulans (strain FGSC A4 / ATCC 38163 / CBS 112.46 / NRRL 194 / M139) (Aspergillus nidulans) protein is Cytochrome c peroxidase, mitochondrial (ccp1).